The primary structure comprises 442 residues: uncharacterized protein (442 aa).

Residues 211–269 (LDYSTDKPEDSESEDIELEDSESEDSESEDIDQHGGQGPDDDEFNANFDDPQFDEFDFG) form a disordered region. Residues 221 to 240 (SESEDIELEDSESEDSESED) show a composition bias toward acidic residues.

It localises to the virion. This is an uncharacterized protein from Acanthamoeba polyphaga (Amoeba).